We begin with the raw amino-acid sequence, 208 residues long: NAD(P)H-quinone oxidoreductase subunit I (208 aa).

4Fe-4S ferredoxin-type domains lie at Gly-55–Val-84 and Arg-95–Glu-124. Cys-64, Cys-67, Cys-70, Cys-74, Cys-104, Cys-107, Cys-110, and Cys-114 together coordinate [4Fe-4S] cluster.

The protein belongs to the complex I 23 kDa subunit family. In terms of assembly, NDH-1 is composed of at least 11 different subunits. [4Fe-4S] cluster is required as a cofactor.

The protein resides in the cellular thylakoid membrane. The enzyme catalyses a plastoquinone + NADH + (n+1) H(+)(in) = a plastoquinol + NAD(+) + n H(+)(out). It carries out the reaction a plastoquinone + NADPH + (n+1) H(+)(in) = a plastoquinol + NADP(+) + n H(+)(out). Its function is as follows. NDH-1 shuttles electrons from an unknown electron donor, via FMN and iron-sulfur (Fe-S) centers, to quinones in the respiratory and/or the photosynthetic chain. The immediate electron acceptor for the enzyme in this species is believed to be plastoquinone. Couples the redox reaction to proton translocation, and thus conserves the redox energy in a proton gradient. The polypeptide is NAD(P)H-quinone oxidoreductase subunit I (Prochlorococcus marinus subsp. pastoris (strain CCMP1986 / NIES-2087 / MED4)).